Here is a 588-residue protein sequence, read N- to C-terminus: Transcriptional regulatory protein ASH1 (588 aa).

Residue Ser56 is modified to Phosphoserine. Disordered stretches follow at residues 85 to 109 (SNTA…GNSP), 377 to 398 (SNNS…QASN), and 417 to 495 (SSVS…TRHT). Residues 99–109 (PISSLTPGNSP) show a composition bias toward polar residues. The segment covering 383–392 (NVRKPSKNKI) has biased composition (basic residues). The segment covering 417–433 (SSVSASSSPSPSTPTKS) has biased composition (low complexity). Ser465 carries the phosphoserine modification. The segment covering 470 to 493 (PRRSSNSSITKKGSRRSSGSSPTR) has biased composition (low complexity). The segment at 499–526 (CVSCHSSDSPCWRPSWSPRKQDQLCNSC) adopts a GATA-type; atypical zinc-finger fold.

In terms of assembly, component of the RPD3C(L) complex composed of at least ASH1, CTI6, DEP1, PHO23, RPD3, RXT2, RXT3, SAP30, SDS3, SIN3, UME1 and UME6.

It is found in the nucleus. Component of the RPD3C(L) histone deacetylase complex (HDAC). Responsible for the deacetylation of lysine residues on the N-terminal part of the core histones (H2A, H2B, H3 and H4). Histone deacetylation gives a tag for epigenetic repression and plays an important role in transcriptional regulation, cell cycle progression and developmental events. ASH1 is necessary to repress HO in daughter cells to block mating-type switching through its binding to HO promoter 5'-YTGAT-3' sites. Also involved in pseudohyphal growth. In Saccharomyces cerevisiae (strain ATCC 204508 / S288c) (Baker's yeast), this protein is Transcriptional regulatory protein ASH1 (ASH1).